The chain runs to 580 residues: Bifunctional lycopene cyclase/phytoene synthase (580 aa).

Helical transmembrane passes span 3-23, 35-55, and 65-85; these read WEYAQVHLKYTIPFGVVLAAV, KLVFLITVAVVSTIPWDSYLI, and GVVVGLTAWDIPAEELFFFVI. Residue asparagine 89 is glycosylated (N-linked (GlcNAc...) asparagine). A run of 4 helical transmembrane segments spans residues 116–136, 139–159, 171–191, and 214–234; these read IAGQILFASAIIFGLVSVSSG, GMYMGLILIWACPFLLFLWSI, NTALPIALPTLYLWVVDTFAL, and IEEAVFFLLTNTLIVFGLIAC.

It in the N-terminal section; belongs to the lycopene beta-cyclase family. This sequence in the C-terminal section; belongs to the phytoene/squalene synthase family.

It is found in the membrane. It carries out the reaction all-trans-lycopene = gamma-carotene. The catalysed reaction is gamma-carotene = all-trans-beta-carotene. The enzyme catalyses 2 (2E,6E,10E)-geranylgeranyl diphosphate = 15-cis-phytoene + 2 diphosphate. Its pathway is carotenoid biosynthesis; beta-carotene biosynthesis. It functions in the pathway carotenoid biosynthesis; phytoene biosynthesis; all-trans-phytoene from geranylgeranyl diphosphate: step 1/1. In terms of biological role, bifunctional enzyme; part of the car gene cluster that mediates the biosynthesis of neurosporaxanthin, a carboxylic apocarotenoid acting as an essential protective pigments and leading to orange pigmentation. CarAR catalyzes the first step of the pathway by converting geranylgeranyl diphosphate to phytoene, as well as the later cyclization step that transforms the carB product lycopene into gamma-carotene. CarAR also converts part of gamma-carotene into beta-carotene. Neurosporaxanthin is synthesized from geranyl-geranyl pyrophosphate (GGPP) through several enzymatic activities. Phytoene synthase activity performed by the bifunctional enzyme carAR first produces phytoene from geranyl-geranyl pyrophosphate (GGPP). The phytoene dehydrogenase carB then introduces 4 desaturations to lead to lycopene which is substrate of the carotene cyclase activity of carAR that leads to the production of gamma-carotene. CarB then performs a 5th desaturation reaction to yield torulene. Torulene is the substrate of the dioxidase carT that breaks the molecule, removing five carbon atoms to yield beta-apo-4'-carotenal, whereas the aldehyde dehydrogenase carD mediates the last step by converting beta-apo-4'-carotenal into neurosporaxanthin. This is Bifunctional lycopene cyclase/phytoene synthase from Gibberella fujikuroi (strain CBS 195.34 / IMI 58289 / NRRL A-6831) (Bakanae and foot rot disease fungus).